We begin with the raw amino-acid sequence, 538 residues long: Phosphoenolpyruvate carboxykinase (ATP) (538 aa).

Substrate contacts are provided by Arg64, Tyr205, and Lys211. ATP-binding positions include Lys211, His230, and 246-254; that span reads GLSGTGKTT. Mn(2+) is bound by residues Lys211 and His230. Asp267 lines the Mn(2+) pocket. ATP is bound by residues Glu295, Arg331, 447–448, and Thr453; that span reads RI. Residue Arg331 participates in substrate binding.

The protein belongs to the phosphoenolpyruvate carboxykinase (ATP) family. In terms of assembly, monomer. Mn(2+) serves as cofactor.

It is found in the cytoplasm. It carries out the reaction oxaloacetate + ATP = phosphoenolpyruvate + ADP + CO2. It functions in the pathway carbohydrate biosynthesis; gluconeogenesis. Its function is as follows. Involved in the gluconeogenesis. Catalyzes the conversion of oxaloacetate (OAA) to phosphoenolpyruvate (PEP) through direct phosphoryl transfer between the nucleoside triphosphate and OAA. The protein is Phosphoenolpyruvate carboxykinase (ATP) of Histophilus somni (strain 129Pt) (Haemophilus somnus).